We begin with the raw amino-acid sequence, 126 residues long: Holo-[acyl-carrier-protein] synthase (126 aa).

Mg(2+) is bound by residues Asp9 and Glu58.

The protein belongs to the P-Pant transferase superfamily. AcpS family. Mg(2+) serves as cofactor.

It is found in the cytoplasm. It carries out the reaction apo-[ACP] + CoA = holo-[ACP] + adenosine 3',5'-bisphosphate + H(+). Its function is as follows. Transfers the 4'-phosphopantetheine moiety from coenzyme A to a Ser of acyl-carrier-protein. The protein is Holo-[acyl-carrier-protein] synthase of Salmonella newport (strain SL254).